Consider the following 144-residue polypeptide: Large ribosomal subunit protein uL11 (144 aa).

It belongs to the universal ribosomal protein uL11 family. As to quaternary structure, part of the ribosomal stalk of the 50S ribosomal subunit. Interacts with L10 and the large rRNA to form the base of the stalk. L10 forms an elongated spine to which L12 dimers bind in a sequential fashion forming a multimeric L10(L12)X complex. In terms of processing, one or more lysine residues are methylated.

In terms of biological role, forms part of the ribosomal stalk which helps the ribosome interact with GTP-bound translation factors. This is Large ribosomal subunit protein uL11 from Streptomyces griseus subsp. griseus (strain JCM 4626 / CBS 651.72 / NBRC 13350 / KCC S-0626 / ISP 5235).